Here is a 131-residue protein sequence, read N- to C-terminus: Profilin-1 (131 aa).

This sequence belongs to the profilin family. Occurs in many kinds of cells as a complex with monomeric actin in a 1:1 ratio.

The protein resides in the cytoplasm. Its subcellular location is the cytoskeleton. Its function is as follows. Binds to actin and affects the structure of the cytoskeleton. At high concentrations, profilin prevents the polymerization of actin, whereas it enhances it at low concentrations. By binding to PIP2, it inhibits the formation of IP3 and DG. This is Profilin-1 from Lilium longiflorum (Trumpet lily).